Reading from the N-terminus, the 308-residue chain is Aspartate carbamoyltransferase catalytic subunit (308 aa).

R58 and T59 together coordinate carbamoyl phosphate. Residue K86 coordinates L-aspartate. 3 residues coordinate carbamoyl phosphate: R108, H136, and Q139. Residues R169 and R222 each contribute to the L-aspartate site. G264 and P265 together coordinate carbamoyl phosphate.

Belongs to the aspartate/ornithine carbamoyltransferase superfamily. ATCase family. In terms of assembly, heterododecamer (2C3:3R2) of six catalytic PyrB chains organized as two trimers (C3), and six regulatory PyrI chains organized as three dimers (R2).

It carries out the reaction carbamoyl phosphate + L-aspartate = N-carbamoyl-L-aspartate + phosphate + H(+). Its pathway is pyrimidine metabolism; UMP biosynthesis via de novo pathway; (S)-dihydroorotate from bicarbonate: step 2/3. Functionally, catalyzes the condensation of carbamoyl phosphate and aspartate to form carbamoyl aspartate and inorganic phosphate, the committed step in the de novo pyrimidine nucleotide biosynthesis pathway. The chain is Aspartate carbamoyltransferase catalytic subunit from Campylobacter hominis (strain ATCC BAA-381 / DSM 21671 / CCUG 45161 / LMG 19568 / NCTC 13146 / CH001A).